The primary structure comprises 354 residues: NADH-quinone oxidoreductase subunit H (354 aa).

8 consecutive transmembrane segments (helical) span residues 23–43 (LVRA…LILW), 91–111 (YIIA…VVPF), 124–144 (LLYV…AGWA), 162–182 (ISYE…TGSL), 203–223 (ILSW…ISGV), 250–270 (GMAF…ISAM), 291–311 (IPGF…FIWL), and 330–350 (IFIP…VSPW).

Belongs to the complex I subunit 1 family. As to quaternary structure, NDH-1 is composed of 14 different subunits. Subunits NuoA, H, J, K, L, M, N constitute the membrane sector of the complex.

Its subcellular location is the cell inner membrane. The enzyme catalyses a quinone + NADH + 5 H(+)(in) = a quinol + NAD(+) + 4 H(+)(out). NDH-1 shuttles electrons from NADH, via FMN and iron-sulfur (Fe-S) centers, to quinones in the respiratory chain. The immediate electron acceptor for the enzyme in this species is believed to be ubiquinone. Couples the redox reaction to proton translocation (for every two electrons transferred, four hydrogen ions are translocated across the cytoplasmic membrane), and thus conserves the redox energy in a proton gradient. This subunit may bind ubiquinone. The chain is NADH-quinone oxidoreductase subunit H from Ralstonia nicotianae (strain ATCC BAA-1114 / GMI1000) (Ralstonia solanacearum).